A 1161-amino-acid polypeptide reads, in one-letter code: PAN2-PAN3 deadenylation complex catalytic subunit pan2 (1161 aa).

WD repeat units follow at residues 20–59 and 276–315; these read GLPT…RYTS and ANVS…HFNE. The linker stretch occupies residues 316–452; sequence MSKEVEFADV…GAKLNGEAED (137 aa). Residues 453–822 form the USP domain; the sequence is DPLLKYSNVE…SPCILAYQAK (370 aa). One can recognise an Exonuclease domain in the interval 871–1049; that stretch reads VALDTEFVDL…IEDARMALRL (179 aa). Aspartate 874, glutamate 876, aspartate 983, and aspartate 1042 together coordinate a divalent metal cation. A WD 4 repeat occupies 1009-1060; sequence NRRLSLRYLAWAVFKEYIQEEPADNNQGHDSIEDARMALRLWKKFQEYEDAG. A disordered region spans residues 1092 to 1161; the sequence is RPGTAVTMQN…GDFFGGSPLK (70 aa). Positions 1097–1110 are enriched in polar residues; that stretch reads VTMQNSSGRNTPST. The segment covering 1116-1129 has biased composition (low complexity); sequence AATATATTSAPATP. Residues 1145–1155 are compositionally biased toward gly residues; sequence TFGGPGAGDFF.

Belongs to the peptidase C19 family. PAN2 subfamily. Forms a heterotrimer with an asymmetric homodimer of the regulatory subunit pan3 to form the poly(A)-nuclease (PAN) deadenylation complex. The cofactor is a divalent metal cation.

The protein resides in the cytoplasm. The catalysed reaction is Exonucleolytic cleavage of poly(A) to 5'-AMP.. With respect to regulation, positively regulated by the regulatory subunit pan3. Catalytic subunit of the poly(A)-nuclease (PAN) deadenylation complex, one of two cytoplasmic mRNA deadenylases involved in mRNA turnover. PAN specifically shortens poly(A) tails of RNA and the activity is stimulated by poly(A)-binding protein pab1. PAN deadenylation is followed by rapid degradation of the shortened mRNA tails by the CCR4-NOT complex. Deadenylated mRNAs are then degraded by two alternative mechanisms, namely exosome-mediated 3'-5' exonucleolytic degradation, or deadenylation-dependent mRNA decaping and subsequent 5'-3' exonucleolytic degradation by xrn1. May also be involved in post-transcriptional maturation of mRNA poly(A) tails. The sequence is that of PAN2-PAN3 deadenylation complex catalytic subunit pan2 from Neosartorya fischeri (strain ATCC 1020 / DSM 3700 / CBS 544.65 / FGSC A1164 / JCM 1740 / NRRL 181 / WB 181) (Aspergillus fischerianus).